A 460-amino-acid polypeptide reads, in one-letter code: Serine incorporator 5 (460 aa).

Over 1–36 (MCTPCCVSQLACCCGSAACSLCCGCCPKIKQSTSTR) the chain is Extracellular. A helical membrane pass occupies residues 37 to 57 (FMYALFFMLVTVTCVIMMSPT). The Cytoplasmic segment spans residues 58–89 (VEMAMREHIPFYSQMCQQLNAGENCSTLVGYS). The helical transmembrane segment at 90–110 (AVYKVCFGMACFFFFFAVFTI) threads the bilayer. Residues 111–124 (RVQNSTGCRAAVHN) lie on the Extracellular side of the membrane. N-linked (GlcNAc...) asparagine glycosylation occurs at N114. The chain crosses the membrane as a helical span at residues 125-145 (GFWFFKFVALLACCAGGFFLP). Over 146-156 (NQDQFLEVWRY) the chain is Cytoplasmic. A helical membrane pass occupies residues 157–177 (VGAAGGFLFIIIQLMLLVQFA). At 178 to 197 (HRWNQNWSSGATYNKLWYAA) the chain is on the extracellular side. N183 is a glycosylation site (N-linked (GlcNAc...) asparagine). The chain crosses the membrane as a helical span at residues 198–218 (LALVTLVLFSVAVGGMVFMFM). Residues 219-230 (YYTHPEACFLNK) are Cytoplasmic-facing. A helical transmembrane segment spans residues 231–251 (IFLGVNGGLCFIVSLLAISPC). At 252–259 (IQTFQPTS) the chain is on the extracellular side. A helical transmembrane segment spans residues 260–280 (GLLQPAVITLYVMYLTFSALA). Over 281 to 311 (SKPIEMVEDEIKGNITVCVFPFKSGLKSDTN) the chain is Cytoplasmic. Residues 312–332 (IVTGVGTAILFCCILYSCLIS) form a helical membrane-spanning segment. The Extracellular portion of the chain corresponds to 333–391 (TTKRSSAALQVYRNDMPENERARCCFCWVDDTEDYDDEKTSGGQNVKYDERDGTVYSYC). A helical transmembrane segment spans residues 392–412 (FFHFVFFLGSLYVMMTVTNWF). The Cytoplasmic segment spans residues 413–433 (HYDNAKIERLLEGSWSVFWIK). Residues 434-454 (MASSWVCLFFYMWTLVVPMLF) traverse the membrane as a helical segment. Residues 455–460 (PQRFQA) lie on the Extracellular side of the membrane.

This sequence belongs to the TDE1 family.

Its subcellular location is the cell membrane. It carries out the reaction a 1,2-diacyl-sn-glycero-3-phospho-L-serine(in) = a 1,2-diacyl-sn-glycero-3-phospho-L-serine(out). It catalyses the reaction a 1,2-diacyl-sn-glycero-3-phosphocholine(in) = a 1,2-diacyl-sn-glycero-3-phosphocholine(out). The catalysed reaction is a 1,2-diacyl-sn-glycero-3-phosphoethanolamine(in) = a 1,2-diacyl-sn-glycero-3-phosphoethanolamine(out). Restriction factor required to restrict infectivity of gammaretroviruses: acts by inhibiting an early step of viral infection. Impairs the penetration of the viral particle into the cytoplasm. Non-ATP-dependent, non-specific lipid transporter for phosphatidylserine, phosphatidylcholine, and phosphatidylethanolamine. Functions as a scramblase that flips lipids in both directions across the membrane. Phospholipid scrambling results in gammaretroviral surface exposure of phosphatidylserine and loss of membrane asymmetry, which leads to loss of infectivity. Enhances the incorporation of serine into phosphatidylserine and sphingolipids. The polypeptide is Serine incorporator 5 (serinc5) (Danio rerio (Zebrafish)).